The following is a 78-amino-acid chain: MFPLIEFCVSNLAQGSQEAKEKLDKDPNLDVMEYGCLSYCGKCMDSPFALVNGEFVSGENAEQLVERIYAFIEENEMF.

It belongs to the UPF0349 family.

This is UPF0349 protein BPUM_2879 from Bacillus pumilus (strain SAFR-032).